Reading from the N-terminus, the 124-residue chain is MESFVAMKVVCIILLFVIAAEAESINEKSDVEPSKGKNNSGLQFKFPPYVPNHKAFALRLLSLCEQGIYGTKINDLKVDFKNCTFLCIRKYENLTLPLPEDTPCGPNNQTCHKKDECVGYIPGC.

The first 22 residues, 1–22 (MESFVAMKVVCIILLFVIAAEA), serve as a signal peptide directing secretion. N82 and N93 each carry an N-linked (GlcNAc...) asparagine glycan. The tract at residues 105–124 (GPNNQTCHKKDECVGYIPGC) is CD4-binding.

The protein belongs to the salp15 family. In terms of assembly, interacts with host CD4. Interacts with host DC-SIGN (CD209). Interacts with Borrelia outer surface protein C (OspC). As to expression, expressed in salivary glands. Detected in fed adult female.

Its subcellular location is the secreted. Its function is as follows. Salivary tick protein that downregulates host immune system by binding to both dendritic cells, and CD4(+) T cells. Specifically binds to the CD4 coreceptor on T cells. This interaction prevents the activation of the Src kinase, Lck, and its downstream substrate Zap-70, and results in deficient activation of PLCgamma1, the repression of calcium fluxes triggered by T-cell antigen receptor (TCR) ligation, and a subsequent reduction in interleukin-2 production. This salivary protein also binds to DC-SIGN (CD209) on dendritic cells (DC) and activates the Raf-1 kinase/MEK signaling pathway that results in down-regulating expression of pro-inflammatory cytokines. Furthermore, it inhibits T cell proliferation induced by DCs. In addition, it inhibits in vitro keratinocyte inflammation induced by Borrelia burgdorferi or by the major outer surface protein (OspC) of Borrelia. In addition, it downregulates chemokines and monocyte chemoattractant protein 1, as well as several antimicrobial peptides such as defensins, cathelicidin, psoriasin, and RNase 7. Apart from its immunomodulatory activities, it is also associated with protection of Borrelia spirochetes from antibody-mediated killing through its binding to OspC. In vivo, tests on different immune disease animal models show promising therapeutic results, e.g., in inhibiting HIV infection, experimental autoimmune encephalomyelitis, transplantation rejection, and asthma. This is Salivary protein 15 Iric-3 from Ixodes ricinus (Common tick).